We begin with the raw amino-acid sequence, 349 residues long: Hypoxia-inducible factor 1-alpha inhibitor (349 aa).

Over residues 1-10 the composition is skewed to low complexity; it reads MAATAAEAVA. The interval 1–51 is disordered; the sequence is MAATAAEAVASGSGEPREEAGALGPAWDESQLRSYSFPTRPIPRLSQSDPR. A2 carries the N-acetylalanine modification. The interval 2-125 is interaction with VHL; the sequence is AATAAEAVAS…PRSNREEMKF (124 aa). In terms of domain architecture, JmjC spans 142–312; the sequence is ERLYLQQTLN…PKRIEYPLKA (171 aa). Residue Y145 participates in 2-oxoglutarate binding. Residues D152 and 181 to 183 each bind substrate; that span reads QLT. A 2-oxoglutarate-binding site is contributed by T196. Fe cation contacts are provided by H199 and D201. 201–203 serves as a coordination point for substrate; the sequence is DEQ. 2-oxoglutarate-binding residues include N205 and K214. 238–239 contacts substrate; that stretch reads RQ. H279 serves as a coordination point for Fe cation. N294 is a 2-oxoglutarate binding site. A300 and N321 together coordinate substrate.

In terms of assembly, homodimer; homodimerization is essential for catalytic activity. Interacts with VHL and HIF1A. Part of a complex with VHL, HIF1A and HDAC1 or HDAC2 or HDAC3. Interacts with NFKB1 and NFKBIA. Interacts with NOTCH1, NOTCH2 and NOTCH3 but not with NOTCH4. Interacts with APBA3; binding inhibits HIF1AN binding to HIF1A. Interacts with TNKS2. Interacts with PPP1R12A. Interacts with ASB4. Interacts with UBE3A. Interacts with ANKS3. Interacts with NECAB3; the interaction is indirect and seems to be mediated by APBA3. Fe(2+) serves as cofactor.

It localises to the nucleus. It is found in the cytoplasm. Its subcellular location is the perinuclear region. The enzyme catalyses L-asparaginyl-[hypoxia-inducible factor alpha subunit] + 2-oxoglutarate + O2 = (3S)-3-hydroxy-L-asparaginyl-[hypoxia-inducible factor alpha subunit] + succinate + CO2. It carries out the reaction L-histidyl-[ankyrin-repeat domain protein] + 2-oxoglutarate + O2 = (3S)-3-hydroxy-L-histidyl-[ankyrin-repeat domain protein] + succinate + CO2. The catalysed reaction is L-asparaginyl-[ankyrin-repeat domain protein] + 2-oxoglutarate + O2 = (3S)-3-hydroxy-L-asparaginyl-[ankyrin-repeat domain protein] + succinate + CO2. It catalyses the reaction L-aspartyl-[ankyrin-repeat domain protein] + 2-oxoglutarate + O2 = (3S)-3-hydroxy-L-aspartyl-[ankyrin-repeat domain protein] + succinate + CO2. In terms of biological role, hydroxylates HIF-1 alpha at 'Asn-803' in the C-terminal transactivation domain (CAD). Functions as an oxygen sensor and, under normoxic conditions, the hydroxylation prevents interaction of HIF-1 with transcriptional coactivators including Cbp/p300-interacting transactivator. Involved in transcriptional repression through interaction with HIF1A, VHL and histone deacetylases. Hydroxylates specific Asn residues within ankyrin repeat domains (ARD) of NFKB1, NFKBIA, NOTCH1, ASB4, PPP1R12A and several other ARD-containing proteins. Also hydroxylates Asp and His residues within ARDs of ANK1 and TNKS2, respectively. Negatively regulates NOTCH1 activity, accelerating myogenic differentiation. Positively regulates ASB4 activity, promoting vascular differentiation. This chain is Hypoxia-inducible factor 1-alpha inhibitor (HIF1AN), found in Homo sapiens (Human).